Reading from the N-terminus, the 144-residue chain is UPF0102 protein Veis_0630 (144 aa).

The tract at residues 11–31 (PPAAAPGPAPAPASAATASER) is disordered.

Belongs to the UPF0102 family.

This chain is UPF0102 protein Veis_0630, found in Verminephrobacter eiseniae (strain EF01-2).